Consider the following 347-residue polypeptide: Adenine deaminase (347 aa).

Zn(2+)-binding residues include His16, His18, and His204. Glu207 (proton donor) is an active-site residue. Zn(2+) is bound at residue Asp285. Asp286 provides a ligand contact to substrate.

The protein belongs to the metallo-dependent hydrolases superfamily. Adenosine and AMP deaminases family. Adenine deaminase type 2 subfamily. Requires Zn(2+) as cofactor.

It localises to the cytoplasm. It is found in the nucleus. It carries out the reaction adenine + H2O + H(+) = hypoxanthine + NH4(+). Catalyzes the hydrolytic deamination of adenine to hypoxanthine. Plays an important role in the purine salvage pathway and in nitrogen catabolism. This chain is Adenine deaminase, found in Candida glabrata (strain ATCC 2001 / BCRC 20586 / JCM 3761 / NBRC 0622 / NRRL Y-65 / CBS 138) (Yeast).